We begin with the raw amino-acid sequence, 308 residues long: Glutaminase (308 aa).

7 residues coordinate substrate: Ser66, Asn117, Glu162, Asn169, Tyr193, Tyr244, and Val262.

It belongs to the glutaminase family. In terms of assembly, homotetramer.

The catalysed reaction is L-glutamine + H2O = L-glutamate + NH4(+). This is Glutaminase from Natranaerobius thermophilus (strain ATCC BAA-1301 / DSM 18059 / JW/NM-WN-LF).